We begin with the raw amino-acid sequence, 165 residues long: Pro-MCH (165 aa).

Residues 1 to 21 (MAKMSLSSYMLMLAFSLFSHG) form the signal peptide. A compositionally biased stretch (basic and acidic residues) spans 69 to 82 (DESGFMKDDDDKTT). The tract at residues 69–89 (DESGFMKDDDDKTTKNTGSKQ) is disordered. Isoleucine 143 carries the isoleucine amide modification. A disulfide bridge connects residues cysteine 153 and cysteine 162.

The protein belongs to the melanin-concentrating hormone family. Pro-MCH is processed differentially in the brain and in peripheral organs producing two neuropeptides; NEI and MCH. A third peptide, NGE, may also be produced. Preferential processing in neurons by prohormone convertase 2 (PC2) generates NEI. MCH is generated in neurons of the lateral hypothalmic area by several prohormone convertases including PC1/3, PC2 and PC5/6. MCH is present in all regions of the brain and in neurointermediate lobe of the pituarity gland, with highest concentrations in the hypothalamus. Also expressed to a much lesser extent in stomach, lamina propria of both duodenum and colon, ovary, thymus, pancreas, adrenal gland and testis (spermatogonia, early spermatocytes and Sertoli cells). Weak expression in heart and lung. The other peptides are expressed at least in Sertoli cells, nei being also expressed in brain, stomach and proximal duodenum. In brain exclusively mature mch and nei peptides are present. In peripheral tissues a large product, encompassing the NEI and MCH domains of the precursor, is found predominantly. At low levels fully processed MCH and NEI peptides are present in gut. No expression in peripheral blood.

Its subcellular location is the secreted. Its function is as follows. MCH inhibits ACTH secretion at the end of the light on period which corresponds to the peak of the circadian rhythm in ACTH. Inhibits also stress induced ACTH release during the light off period of the cycle. Involved as a neurotransmitter or neuromodulator in a broad array of neuronal functions. Stimulates sexual behavior when injected into the ventromedial nucleus, this effect is antagonized by NEI. In the medial preoptic area, stimulates anxiety and sexual behavior. Antagonizes inhibitory effect of melanotropin alpha on exploration behavior. NEI can influence differentiation of neuronal processes in brain neurons. Affects the content of neurofilament protein in neuritogenesis (in vitro). May also be a neuromodulatory factor. In behavioral tests, it stimulates exploration and anxiety when injected into the ventromedial nucleus. Also stimulates grooming, locomotion and rearing. May antagonize the inhibitory effect of mch on ACTH release. Reduces dopamine and dopac release in the ventromedial nucleus. In Rattus norvegicus (Rat), this protein is Pro-MCH (Pmch).